A 343-amino-acid polypeptide reads, in one-letter code: MKEKILTFSSDPSSPVTRHETEEDTGDDLFSLRPCDFEDYVGQDRTVETLRIAIAAAKQRSEPLEHVLFHGPPGLGKTTLAHIIAAEMGTSLTITSGPALEKGGDLIGMLTHLKRGDILFVDEIHRLPRTTEEFLYPAMEDFAVDFVFDKGIHARCHRYRLNQFVLVGATTRVGLLSAPLRDRFGIFRKFDFYSRQDLARIVSRSAALMGLTIDETCTMELARRSRGTPRIVNRLLKRVRDYVQVRHGGVITVSAIDDALALEGVDEKGLTGLDRSYLETIIQYYGGGPVGIEAIGATLQEETDTLVDVVEPFLLAEGLLQRTSSGRKATEAAYRHLGVQWRG.

Residues 1 to 26 form a disordered region; sequence MKEKILTFSSDPSSPVTRHETEEDTG. The segment at 3–193 is large ATPase domain (RuvB-L); sequence EKILTFSSDP…FGIFRKFDFY (191 aa). Residues 7–16 are compositionally biased toward polar residues; that stretch reads TFSSDPSSPV. Residues Leu32, Arg33, Gly74, Lys77, Thr78, Thr79, 140–142, Arg183, Tyr193, and Arg230 each bind ATP; that span reads EDF. Thr78 is a binding site for Mg(2+). Residues 194–264 form a small ATPAse domain (RuvB-S) region; the sequence is SRQDLARIVS…AIDDALALEG (71 aa). The head domain (RuvB-H) stretch occupies residues 267–343; it reads EKGLTGLDRS…YRHLGVQWRG (77 aa). 2 residues coordinate DNA: Arg322 and Arg327.

The protein belongs to the RuvB family. As to quaternary structure, homohexamer. Forms an RuvA(8)-RuvB(12)-Holliday junction (HJ) complex. HJ DNA is sandwiched between 2 RuvA tetramers; dsDNA enters through RuvA and exits via RuvB. An RuvB hexamer assembles on each DNA strand where it exits the tetramer. Each RuvB hexamer is contacted by two RuvA subunits (via domain III) on 2 adjacent RuvB subunits; this complex drives branch migration. In the full resolvosome a probable DNA-RuvA(4)-RuvB(12)-RuvC(2) complex forms which resolves the HJ.

Its subcellular location is the cytoplasm. It catalyses the reaction ATP + H2O = ADP + phosphate + H(+). Its function is as follows. The RuvA-RuvB-RuvC complex processes Holliday junction (HJ) DNA during genetic recombination and DNA repair, while the RuvA-RuvB complex plays an important role in the rescue of blocked DNA replication forks via replication fork reversal (RFR). RuvA specifically binds to HJ cruciform DNA, conferring on it an open structure. The RuvB hexamer acts as an ATP-dependent pump, pulling dsDNA into and through the RuvAB complex. RuvB forms 2 homohexamers on either side of HJ DNA bound by 1 or 2 RuvA tetramers; 4 subunits per hexamer contact DNA at a time. Coordinated motions by a converter formed by DNA-disengaged RuvB subunits stimulates ATP hydrolysis and nucleotide exchange. Immobilization of the converter enables RuvB to convert the ATP-contained energy into a lever motion, pulling 2 nucleotides of DNA out of the RuvA tetramer per ATP hydrolyzed, thus driving DNA branch migration. The RuvB motors rotate together with the DNA substrate, which together with the progressing nucleotide cycle form the mechanistic basis for DNA recombination by continuous HJ branch migration. Branch migration allows RuvC to scan DNA until it finds its consensus sequence, where it cleaves and resolves cruciform DNA. The chain is Holliday junction branch migration complex subunit RuvB from Desulfosudis oleivorans (strain DSM 6200 / JCM 39069 / Hxd3) (Desulfococcus oleovorans).